A 194-amino-acid polypeptide reads, in one-letter code: Crossover junction endodeoxyribonuclease RuvC (194 aa).

Residues aspartate 8, glutamate 72, and aspartate 144 contribute to the active site. Residues aspartate 8, glutamate 72, and aspartate 144 each contribute to the Mg(2+) site.

Belongs to the RuvC family. As to quaternary structure, homodimer which binds Holliday junction (HJ) DNA. The HJ becomes 2-fold symmetrical on binding to RuvC with unstacked arms; it has a different conformation from HJ DNA in complex with RuvA. In the full resolvosome a probable DNA-RuvA(4)-RuvB(12)-RuvC(2) complex forms which resolves the HJ. The cofactor is Mg(2+).

The protein resides in the cytoplasm. It carries out the reaction Endonucleolytic cleavage at a junction such as a reciprocal single-stranded crossover between two homologous DNA duplexes (Holliday junction).. Functionally, the RuvA-RuvB-RuvC complex processes Holliday junction (HJ) DNA during genetic recombination and DNA repair. Endonuclease that resolves HJ intermediates. Cleaves cruciform DNA by making single-stranded nicks across the HJ at symmetrical positions within the homologous arms, yielding a 5'-phosphate and a 3'-hydroxyl group; requires a central core of homology in the junction. The consensus cleavage sequence is 5'-(A/T)TT(C/G)-3'. Cleavage occurs on the 3'-side of the TT dinucleotide at the point of strand exchange. HJ branch migration catalyzed by RuvA-RuvB allows RuvC to scan DNA until it finds its consensus sequence, where it cleaves and resolves the cruciform DNA. This is Crossover junction endodeoxyribonuclease RuvC from Psychrobacter arcticus (strain DSM 17307 / VKM B-2377 / 273-4).